The following is a 526-amino-acid chain: Cytochrome P450 4F5 (526 aa).

Cys470 is a heme binding site.

The protein belongs to the cytochrome P450 family. Heme serves as cofactor. High expression in liver and kidney. Lower expression in brain.

The protein localises to the endoplasmic reticulum membrane. Its subcellular location is the microsome membrane. The enzyme catalyses an organic molecule + reduced [NADPH--hemoprotein reductase] + O2 = an alcohol + oxidized [NADPH--hemoprotein reductase] + H2O + H(+). The polypeptide is Cytochrome P450 4F5 (Cyp4f5) (Rattus norvegicus (Rat)).